The chain runs to 525 residues: MATLLRSKLTNVATSVSNKSQAKVSGMFARMGFQAATDEEAVGFAHCDDLDFEHRQGLQMDILKSEGEPCGDEGAEPPVEGDIHYQRGGAPLPPSGSKDQAVGAGGEFGGHDKPKITAWEAGWNVTNAIQGMFVLGLPYAILHGGYLGLFLIIFAAVVCCYTGKILIACLYEENEDGEVVRVRDSYVAIANACCAPRFPTLGGRVVNVAQIIELVMTCILYVVVSGNLMYNSFPGLPVSQKSWSIIATAVLLPCAFLKNLKAVSKFSLLCTLAHFVINILVIAYCLSRARDWAWEKVKFYIDVKKFPISIGIIVFSYTSQIFLPSLEGNMQQPSEFHCMMNWTHIAACVLKGLFALVAYLTWADETKEVITDNLPGSIRAVVNIFLVAKALLSYPLPFFAAVEVLEKSLFQEGSRAFFPACYGGDGRLKSWGLTLRCALVVFTLLMAIYVPHFALLMGLTGSLTGAGLCFLLPSLFHLRLLWRKLLWHQVFFDVAIFVIGGICSVSGFVHSLEGLIEAYRTNAED.

Residues 1 to 132 (MATLLRSKLT…WNVTNAIQGM (132 aa)) are Cytoplasmic-facing. Residues 133–153 (FVLGLPYAILHGGYLGLFLII) traverse the membrane as a helical segment. Residues 154 to 204 (FAAVVCCYTGKILIACLYEENEDGEVVRVRDSYVAIANACCAPRFPTLGGR) are Lumenal, vesicle-facing. Residue tyrosine 186 is modified to 3'-nitrotyrosine. The helical transmembrane segment at 205–225 (VVNVAQIIELVMTCILYVVVS) threads the bilayer. Over 226 to 265 (GNLMYNSFPGLPVSQKSWSIIATAVLLPCAFLKNLKAVSK) the chain is Cytoplasmic. Residues 266–286 (FSLLCTLAHFVINILVIAYCL) form a helical membrane-spanning segment. Over 287–305 (SRARDWAWEKVKFYIDVKK) the chain is Lumenal, vesicle. A helical membrane pass occupies residues 306 to 326 (FPISIGIIVFSYTSQIFLPSL). Topologically, residues 327–341 (EGNMQQPSEFHCMMN) are cytoplasmic. Residues 342–362 (WTHIAACVLKGLFALVAYLTW) traverse the membrane as a helical segment. Over 363–383 (ADETKEVITDNLPGSIRAVVN) the chain is Lumenal, vesicle. Residues 384-404 (IFLVAKALLSYPLPFFAAVEV) form a helical membrane-spanning segment. At 405–438 (LEKSLFQEGSRAFFPACYGGDGRLKSWGLTLRCA) the chain is on the cytoplasmic side. The chain crosses the membrane as a helical span at residues 439–459 (LVVFTLLMAIYVPHFALLMGL). Residues 460 to 461 (TG) lie on the Lumenal, vesicle side of the membrane. The helical transmembrane segment at 462–482 (SLTGAGLCFLLPSLFHLRLLW) threads the bilayer. Over 483–489 (RKLLWHQ) the chain is Cytoplasmic. The chain crosses the membrane as a helical span at residues 490-510 (VFFDVAIFVIGGICSVSGFVH). At 511–525 (SLEGLIEAYRTNAED) the chain is on the lumenal, vesicle side.

The protein belongs to the amino acid/polyamine transporter 2 family. As to expression, brain. Expressed at high levels within the neocortex, hippocampus, cerebellum, striatum, septal nuclei and the reticular nucleus of the thalamus. Also expressed in islets where it is more abundant in the peripheral/mantle region. Highly expressed in the nerve endings of GABA neurons in the brain and spinal cord but also in glycinergic nerve endings. Expressed in glycine-, GABA- or GABA- and glycine-containing boutons.

Its subcellular location is the cytoplasmic vesicle. It is found in the secretory vesicle. The protein resides in the synaptic vesicle membrane. It localises to the presynapse. The enzyme catalyses beta-alanine(out) + n H(+)(in) = beta-alanine(in) + n H(+)(out). It catalyses the reaction 4-aminobutanoate(out) + n H(+)(in) = 4-aminobutanoate(in) + n H(+)(out). It carries out the reaction glycine(out) + n H(+)(in) = glycine(in) + n H(+)(out). Functionally, antiporter that exchanges vesicular protons for cytosolic 4-aminobutanoate or to a lesser extend glycine, thus allowing their secretion from nerve terminals. The transport is equally dependent on the chemical and electrical components of the proton gradient. May also transport beta-alanine. Acidification of GABAergic synaptic vesicles is a prerequisite for 4-aminobutanoate uptake. This Rattus norvegicus (Rat) protein is Vesicular inhibitory amino acid transporter.